The primary structure comprises 366 residues: MERITVNLAERSYPISIGAGLFEDPAYLSQVLSNKNTNQKVVVISNVTVAPLYADKILHQLKQLGCDASLLELPDGEQYKNLDVFNQVMNFLLEGSYARDVVIIALGGGVIGDLVGFASACYQRGVDFIQIPTTLLSQVDSSVGGKTAVNHPLGKNMIGAFYQPKAVIIDTNCLSTLPEREFAAGIAEVIKYGIIYDGAFFDWLEENLDRLYTLDEDALTYAIARCCQIKAEVVAQDEKESGIRALLNLGHTFGHAIEAELGYGNWLHGEAVSSGTVMAAKTSLLRGLISEEQFERIVALLRRAKLPVHTPDSMSFDDFIKHMMRDKKVLSGQLRLVLPTGIGSAEVIADTSQEVIQQAIDFGRNI.

Residues 75-80 (DGEQYK), 109-113 (GVIGD), 133-134 (TT), Lys146, Lys155, and 173-176 (CLST) contribute to the NAD(+) site. Residues Glu188, His251, and His268 each coordinate Zn(2+).

It belongs to the sugar phosphate cyclases superfamily. Dehydroquinate synthase family. Requires NAD(+) as cofactor. It depends on Co(2+) as a cofactor. The cofactor is Zn(2+).

It localises to the cytoplasm. It carries out the reaction 7-phospho-2-dehydro-3-deoxy-D-arabino-heptonate = 3-dehydroquinate + phosphate. It participates in metabolic intermediate biosynthesis; chorismate biosynthesis; chorismate from D-erythrose 4-phosphate and phosphoenolpyruvate: step 2/7. Its function is as follows. Catalyzes the conversion of 3-deoxy-D-arabino-heptulosonate 7-phosphate (DAHP) to dehydroquinate (DHQ). This is 3-dehydroquinate synthase from Vibrio parahaemolyticus serotype O3:K6 (strain RIMD 2210633).